Here is a 149-residue protein sequence, read N- to C-terminus: Hut operon positive regulatory protein (149 aa).

The protein belongs to the HutP family. Homohexamer.

Functionally, antiterminator that binds to cis-acting regulatory sequences on the mRNA in the presence of histidine, thereby suppressing transcription termination and activating the hut operon for histidine utilization. In Geobacillus sp. (strain WCH70), this protein is Hut operon positive regulatory protein.